A 452-amino-acid chain; its full sequence is C4-dicarboxylate transport protein 1 (452 aa).

Transmembrane regions (helical) follow at residues 18–38 (FQVVCAVIAGVALGYFYPSVG), 51–71 (LIKMMIAPIIFCTVVVGIAGM), 83–103 (LALLYFEVVSTFALIIGLLLV), 151–171 (AFAKGEILQVLLLAILFGFAL), 191–211 (VLFTIVGFIMKVAPIGAFGAM), 229–249 (LMGAFYLTCLIFIFGVLGAIA), 304–324 (GYSFNLDGTSIYLTMAAVFIA), 337–357 (ITLLGVLLLTSKGAAGVTGSG), and 359–379 (IVLAATLSAVGTVPVAGLALI). Residues 426-452 (WEEAQEPERVLDKKTEHMPVSAMSDAG) are disordered. Over residues 431–442 (EPERVLDKKTEH) the composition is skewed to basic and acidic residues.

Belongs to the dicarboxylate/amino acid:cation symporter (DAACS) (TC 2.A.23) family.

It is found in the cell inner membrane. Its function is as follows. Responsible for the transport of dicarboxylates such as succinate, fumarate, and malate from the periplasm across the membrane. The protein is C4-dicarboxylate transport protein 1 of Polaromonas naphthalenivorans (strain CJ2).